We begin with the raw amino-acid sequence, 263 residues long: 5'-nucleotidase SurE (263 aa).

Residues aspartate 11, aspartate 12, serine 42, and asparagine 96 each contribute to the a divalent metal cation site.

Belongs to the SurE nucleotidase family. It depends on a divalent metal cation as a cofactor.

The protein localises to the cytoplasm. The enzyme catalyses a ribonucleoside 5'-phosphate + H2O = a ribonucleoside + phosphate. Functionally, nucleotidase that shows phosphatase activity on nucleoside 5'-monophosphates. The polypeptide is 5'-nucleotidase SurE (Methanocorpusculum labreanum (strain ATCC 43576 / DSM 4855 / Z)).